The chain runs to 341 residues: Malate dehydrogenase, mitochondrial (341 aa).

NAD(+) is bound by residues glycine 35–glycine 41 and aspartate 61. Substrate is bound by residues arginine 109 and arginine 115. Asparagine 122 is an NAD(+) binding site. Asparagine 147 and arginine 181 together coordinate substrate. Histidine 205 acts as the Proton acceptor in catalysis. Position 254 (methionine 254) interacts with NAD(+).

This sequence belongs to the LDH/MDH superfamily. MDH type 1 family. In terms of assembly, homodimer.

It is found in the mitochondrion matrix. It catalyses the reaction (S)-malate + NAD(+) = oxaloacetate + NADH + H(+). In Schizosaccharomyces pombe (strain 972 / ATCC 24843) (Fission yeast), this protein is Malate dehydrogenase, mitochondrial (MDH1).